Reading from the N-terminus, the 123-residue chain is Small ribosomal subunit protein uS12 (123 aa).

D89 carries the post-translational modification 3-methylthioaspartic acid.

Belongs to the universal ribosomal protein uS12 family. As to quaternary structure, part of the 30S ribosomal subunit. Contacts proteins S8 and S17. May interact with IF1 in the 30S initiation complex.

With S4 and S5 plays an important role in translational accuracy. Functionally, interacts with and stabilizes bases of the 16S rRNA that are involved in tRNA selection in the A site and with the mRNA backbone. Located at the interface of the 30S and 50S subunits, it traverses the body of the 30S subunit contacting proteins on the other side and probably holding the rRNA structure together. The combined cluster of proteins S8, S12 and S17 appears to hold together the shoulder and platform of the 30S subunit. This chain is Small ribosomal subunit protein uS12, found in Bartonella tribocorum (strain CIP 105476 / IBS 506).